The following is a 185-amino-acid chain: NEDD8-conjugating enzyme UBE2F (185 aa).

The segment at 1–29 (MLTLASKLKRDDGVRGPRASNPASDSTRR) is interaction with UBA3. The tract at residues 11–30 (DDGVRGPRASNPASDSTRRV) is disordered. A UBC core domain is found at 32-185 (VRDKLLVKEV…VEDYIKRYAR (154 aa)). Residue cysteine 116 is the Glycyl thioester intermediate of the active site.

This sequence belongs to the ubiquitin-conjugating enzyme family. UBE2F subfamily.

It catalyses the reaction [E1 NEDD8-activating enzyme]-S-[NEDD8 protein]-yl-L-cysteine + [E2 NEDD8-conjugating enzyme]-L-cysteine = [E1 NEDD8-activating enzyme]-L-cysteine + [E2 NEDD8-conjugating enzyme]-S-[NEDD8-protein]-yl-L-cysteine.. The protein operates within protein modification; protein neddylation. Its function is as follows. Accepts the ubiquitin-like protein NEDD8 from the UBA3-NAE1 E1 complex and catalyzes its covalent attachment to other proteins. Together with the E3 ubiquitin ligase RNF7/RBX2, specifically neddylates cullin-5 (CUL5). Does not neddylate CUL1, CUL2, CUL3, CUL4A or CUL4B. This chain is NEDD8-conjugating enzyme UBE2F (UBE2F), found in Gallus gallus (Chicken).